A 281-amino-acid chain; its full sequence is Tetraspanin-33 (281 aa).

Residues 1–23 are Cytoplasmic-facing; the sequence is MGNAKRATQNDEDYTFVSPVVKY. A helical membrane pass occupies residues 24–44; that stretch reads LLFFFNMIFWIISLVLISIGV. Residues 45 to 62 lie on the Extracellular side of the membrane; it reads YSRIVKHETALACLTVDP. The helical transmembrane segment at 63–83 threads the bilayer; sequence ALILMVVGILMFFITFCGCVG. Topologically, residues 84–94 are cytoplasmic; that stretch reads SLRENICLLQT. Residues 95–115 form a helical membrane-spanning segment; the sequence is FCIFLTIMFLLQLLAGVLGFV. The Extracellular portion of the chain corresponds to 116-233; the sequence is FSDKARGKVT…DILVNWIHSN (118 aa). 4 cysteine pairs are disulfide-bonded: Cys-154–Cys-222, Cys-155–Cys-187, Cys-171–Cys-181, and Cys-188–Cys-201. N-linked (GlcNAc...) asparagine glycosylation is present at Asn-170. Residues 234–254 traverse the membrane as a helical segment; the sequence is LFLLGGIALGLTIPQLVGILL. The Cytoplasmic portion of the chain corresponds to 255–281; that stretch reads SQVLINQIQDQIKLQNYNQQHRSDPWS.

This sequence belongs to the tetraspanin (TM4SF) family. In terms of assembly, homodimer; disulfide-linked.

The protein localises to the cell membrane. Its subcellular location is the cell junction. The protein resides in the adherens junction. It is found in the cytoplasm. Its function is as follows. Part of TspanC8 subgroup, composed of 6 members that interact with the transmembrane metalloprotease ADAM10. This interaction is required for ADAM10 exit from the endoplasmic reticulum and for enzymatic maturation and trafficking to the cell surface as well as substrate specificity. Different TspanC8/ADAM10 complexes have distinct substrates. The polypeptide is Tetraspanin-33 (tspan33) (Danio rerio (Zebrafish)).